A 189-amino-acid polypeptide reads, in one-letter code: UPF0312 protein VPA0850 (189 aa).

The first 22 residues, 1–22 (MKKSLFATGLAIAMALPLGAQA), serve as a signal peptide directing secretion.

The protein belongs to the UPF0312 family. Type 1 subfamily.

The protein localises to the periplasm. The sequence is that of UPF0312 protein VPA0850 from Vibrio parahaemolyticus serotype O3:K6 (strain RIMD 2210633).